The chain runs to 157 residues: Phosphopantetheine adenylyltransferase (157 aa).

Residue serine 9 participates in substrate binding. Residues 9-10 and histidine 17 each bind ATP; that span reads SF. The substrate site is built by lysine 41, leucine 73, and lysine 87. ATP is bound by residues 88 to 90, glutamate 98, and 123 to 129; these read GLR and YSYLSSS.

The protein belongs to the bacterial CoaD family. In terms of assembly, homohexamer. It depends on Mg(2+) as a cofactor.

The protein resides in the cytoplasm. The catalysed reaction is (R)-4'-phosphopantetheine + ATP + H(+) = 3'-dephospho-CoA + diphosphate. The protein operates within cofactor biosynthesis; coenzyme A biosynthesis; CoA from (R)-pantothenate: step 4/5. Reversibly transfers an adenylyl group from ATP to 4'-phosphopantetheine, yielding dephospho-CoA (dPCoA) and pyrophosphate. The protein is Phosphopantetheine adenylyltransferase of Alkaliphilus metalliredigens (strain QYMF).